A 62-amino-acid polypeptide reads, in one-letter code: Large ribosomal subunit protein bL28 (62 aa).

Belongs to the bacterial ribosomal protein bL28 family.

This chain is Large ribosomal subunit protein bL28, found in Thermoanaerobacter pseudethanolicus (strain ATCC 33223 / 39E) (Clostridium thermohydrosulfuricum).